We begin with the raw amino-acid sequence, 311 residues long: F-box protein At3g18320 (311 aa).

Residues 1 to 46 (MTLPELPKDLVEEILCFVPATSLKRLRSTCKGWNRLFKDDKRFARK) form the F-box domain.

The polypeptide is F-box protein At3g18320 (Arabidopsis thaliana (Mouse-ear cress)).